Here is a 1481-residue protein sequence, read N- to C-terminus: Cystic fibrosis transmembrane conductance regulator (1481 aa).

Residues 1–77 (MQRSPLEKAS…KLINALRRCF (77 aa)) lie on the Cytoplasmic side of the membrane. Residues 78–98 (FWRFMFYGIILYLGEVTKAVQ) form a helical membrane-spanning segment. One can recognise an ABC transmembrane type-1 1 domain in the interval 81 to 365 (FMFYGIILYL…WAVQTWYDSL (285 aa)). Residues 99-122 (PLLLGRIIASYDPDNKVERSIAIY) are Extracellular-facing. A helical membrane pass occupies residues 123-146 (LGIGLCLLFIVRTLLLHPAIFGLH). At 147 to 195 (HIGMQMRIAMFSLIYKKTLKLSSRVLDKISIGQLVSLLSNNLNKFDEGL) the chain is on the cytoplasmic side. A helical membrane pass occupies residues 196-216 (ALAHFVWIAPLQVTLLMGLLW). At 217-222 (ELLQAF) the chain is on the extracellular side. A helical membrane pass occupies residues 223 to 243 (TFCGLAFLIVLALLQAGLGKM). Residues 244–298 (MMKYRDQRAGKINERLVITSEMIENIQSVKAYCWEEAMEKIIENLRQTELKLTRK) lie on the Cytoplasmic side of the membrane. A helical membrane pass occupies residues 299–319 (AAYVRYLNSSAFFFSGFFVVF). The Extracellular portion of the chain corresponds to 320–339 (LSVLPYALLKGIILRKIFTT). Residues 340-358 (ISFCIVLRMAVTRQFPWAV) form a helical membrane-spanning segment. Over 359-858 (QTWYDSLGAI…YLRYITVHKS (500 aa)) the chain is Cytoplasmic. ATP is bound by residues W401, 457–464 (GSTGAGKT), and Q492. Positions 423–645 (NGDNSLFFSN…RPDFSSKLMG (223 aa)) constitute an ABC transporter 1 domain. The S-palmitoyl cysteine moiety is linked to residue C523. A Phosphoserine modification is found at S548. The interval 653–831 (TAERRNSIIT…EEINEEDLRD (179 aa)) is disordered R region. A phosphoserine; by PKA mark is found at S659 and S669. Position 685 is a phosphoserine; by PKC (S685). K687 is covalently cross-linked (Glycyl lysine isopeptide (Lys-Gly) (interchain with G-Cter in ubiquitin)). Residue S699 is modified to Phosphoserine; by PKA. The residue at position 711 (S711) is a Phosphoserine. T716 carries the phosphothreonine modification. A phosphoserine; by PKA mark is found at S736 and S767. The residue at position 790 (S790) is a Phosphoserine; by PKC. Phosphoserine; by PKA is present on residues S795 and S813. The chain crosses the membrane as a helical span at residues 859–879 (LMFVLIWCLVVFLVEVAASLV). Residues 859–1155 (LMFVLIWCLV…AVNSSIDVDS (297 aa)) enclose the ABC transmembrane type-1 2 domain. The Extracellular segment spans residues 880-918 (VLCLFPKIFFQDKGNSTKSANNSYAVIITSTSSYYIFYI). 2 N-linked (GlcNAc...) asparagine glycosylation sites follow: N894 and N900. A discontinuously helical transmembrane segment spans residues 919–939 (YVGVADTLLALGLFRGLPLVH). The Cytoplasmic portion of the chain corresponds to 940–990 (TLITVSKTLHHKMLQSVLQAPMSTLNTLKTGGILNRFSKDIAVLDDLLPLT). The chain crosses the membrane as a helical span at residues 991 to 1011 (IFDFVQLLLIVIGAVVVVSVL). Over 1012-1013 (QP) the chain is Extracellular. The helical transmembrane segment at 1014–1034 (YIFLATVPVIAAFILLRAYFL) threads the bilayer. At 1035-1095 (HTSQQLKQLE…TANWFLYLST (61 aa)) the chain is on the cytoplasmic side. Residues 1096–1116 (LRWFQMRIEMIFVIFFIAVTF) form a helical membrane-spanning segment. Residues 1117–1130 (ISILTTGEGEGRVG) lie on the Extracellular side of the membrane. A helical membrane pass occupies residues 1131–1151 (IILTLAMNIMGTLQWAVNSSI). Residues 1152–1481 (DVDSLMRSVS…TEEEVQETKL (330 aa)) are Cytoplasmic-facing. The ABC transporter 2 domain occupies 1211–1444 (MTVKDLTAKY…KSLFRQAISP (234 aa)). ATP contacts are provided by residues Y1220 and 1245 to 1252 (GRTGSGKS). The segment at 1387-1481 (RTLKQAFANC…TEEEVQETKL (95 aa)) is interaction with GORASP2. Residue C1396 is the site of S-palmitoyl cysteine attachment. Residues 1453-1481 (HRNSSRQRSRSNIAALKEETEEEVQETKL) form a disordered region. S1457 is modified (phosphoserine). The segment covering 1471-1481 (ETEEEVQETKL) has biased composition (acidic residues). The PDZ-binding signature appears at 1479–1481 (TKL).

Belongs to the ABC transporter superfamily. ABCC family. CFTR transporter (TC 3.A.1.202) subfamily. In terms of assembly, monomer; does not require oligomerization for channel activity. May form oligomers in the membrane. Interacts with SLC26A3, SLC26A6 and NHERF1. Interacts with SHANK2. Interacts with MYO6. Interacts (via C-terminus) with GOPC (via PDZ domain); this promotes CFTR internalization and thereby decreases channel activity. Interacts with SLC4A7 through NHERF1. Found in a complex with MYO5B and RAB11A. Interacts with ANO1. Interacts with SLC26A8. Interacts with AHCYL1; the interaction increases CFTR activity. Interacts with CSE1L. The core-glycosylated form interacts with GORASP2 (via PDZ GRASP-type 1 domain) in respone to ER stress. Interacts with MARCHF2; the interaction leads to CFTR ubiqtuitination and degradation. Interacts with ADGRG2. In terms of processing, N-glycosylated. Post-translationally, phosphorylated; cAMP treatment promotes phosphorylation and activates the channel. Dephosphorylation decreases the ATPase activity (in vitro). Phosphorylation at PKA sites activates the channel. Phosphorylation at PKC sites enhances the response to phosphorylation by PKA. Phosphorylated by AMPK; this inhibits channel activity. Ubiquitinated, leading to its degradation in the lysosome. Deubiquitination by USP10 in early endosomes enhances its endocytic recycling to the cell membrane. Ubiquitinated by RNF185 during ER stress. Ubiquitinated by MARCHF2.

Its subcellular location is the apical cell membrane. The protein resides in the early endosome membrane. It localises to the cell membrane. It is found in the recycling endosome membrane. The protein localises to the endoplasmic reticulum membrane. Its subcellular location is the nucleus. It carries out the reaction ATP + H2O + closed Cl(-) channel = ADP + phosphate + open Cl(-) channel.. The catalysed reaction is chloride(in) = chloride(out). The enzyme catalyses hydrogencarbonate(in) = hydrogencarbonate(out). It catalyses the reaction ATP + H2O = ADP + phosphate + H(+). Functionally, epithelial ion channel that plays an important role in the regulation of epithelial ion and water transport and fluid homeostasis. Mediates the transport of chloride ions across the cell membrane. Possesses an intrinsic ATPase activity and utilizes ATP to gate its channel; the passive flow of anions through the channel is gated by cycles of ATP binding and hydrolysis by the ATP-binding domains. The ion channel is also permeable to HCO(3)(-); selectivity depends on the extracellular chloride concentration. Exerts its function also by modulating the activity of other ion channels and transporters. Contributes to the regulation of the pH and the ion content of the epithelial fluid layer. Modulates the activity of the epithelial sodium channel (ENaC) complex, in part by regulating the cell surface expression of the ENaC complex. May regulate bicarbonate secretion and salvage in epithelial cells by regulating the transporter SLC4A7. Can inhibit the chloride channel activity of ANO1. Plays a role in the chloride and bicarbonate homeostasis during sperm epididymal maturation and capacitation. The chain is Cystic fibrosis transmembrane conductance regulator from Bos taurus (Bovine).